A 371-amino-acid chain; its full sequence is Chaperone protein DnaJ (371 aa).

The J domain occupies 5–69; that stretch reads DYYEVLGLSK…QKRAQYDQFG (65 aa). The segment at 133–215 adopts a CR-type zinc-finger fold; the sequence is GKELNVEIPV…CHGSGKVRKR (83 aa). Zn(2+)-binding residues include Cys146, Cys149, Cys163, Cys166, Cys189, Cys192, Cys203, and Cys206. 4 CXXCXGXG motif repeats span residues 146–153, 163–170, 189–196, and 203–210; these read CDTCKGSG, CKHCSGSG, CGHCSGTG, and CTTCHGSG.

This sequence belongs to the DnaJ family. As to quaternary structure, homodimer. Requires Zn(2+) as cofactor.

Its subcellular location is the cytoplasm. Participates actively in the response to hyperosmotic and heat shock by preventing the aggregation of stress-denatured proteins and by disaggregating proteins, also in an autonomous, DnaK-independent fashion. Unfolded proteins bind initially to DnaJ; upon interaction with the DnaJ-bound protein, DnaK hydrolyzes its bound ATP, resulting in the formation of a stable complex. GrpE releases ADP from DnaK; ATP binding to DnaK triggers the release of the substrate protein, thus completing the reaction cycle. Several rounds of ATP-dependent interactions between DnaJ, DnaK and GrpE are required for fully efficient folding. Also involved, together with DnaK and GrpE, in the DNA replication of plasmids through activation of initiation proteins. This Bacillus cereus (strain ATCC 10987 / NRS 248) protein is Chaperone protein DnaJ.